The following is a 301-amino-acid chain: tRNA uridine(34) hydroxylase (301 aa).

In terms of domain architecture, Rhodanese spans 121-215 (RSDDVVLIDT…YLEEVPAENS (95 aa)). The active-site Cysteine persulfide intermediate is cysteine 175.

This sequence belongs to the TrhO family.

The enzyme catalyses uridine(34) in tRNA + AH2 + O2 = 5-hydroxyuridine(34) in tRNA + A + H2O. Catalyzes oxygen-dependent 5-hydroxyuridine (ho5U) modification at position 34 in tRNAs. The chain is tRNA uridine(34) hydroxylase from Ruegeria pomeroyi (strain ATCC 700808 / DSM 15171 / DSS-3) (Silicibacter pomeroyi).